A 192-amino-acid chain; its full sequence is Orotate phosphoribosyltransferase (192 aa).

Residue 116–124 coordinates 5-phospho-alpha-D-ribose 1-diphosphate; sequence EDIVTTGLS. Orotate-binding residues include T120 and R148.

This sequence belongs to the purine/pyrimidine phosphoribosyltransferase family. PyrE subfamily. In terms of assembly, homodimer. The cofactor is Mg(2+).

It carries out the reaction orotidine 5'-phosphate + diphosphate = orotate + 5-phospho-alpha-D-ribose 1-diphosphate. Its pathway is pyrimidine metabolism; UMP biosynthesis via de novo pathway; UMP from orotate: step 1/2. In terms of biological role, catalyzes the transfer of a ribosyl phosphate group from 5-phosphoribose 1-diphosphate to orotate, leading to the formation of orotidine monophosphate (OMP). The protein is Orotate phosphoribosyltransferase of Brucella canis (strain ATCC 23365 / NCTC 10854 / RM-666).